Here is a 143-residue protein sequence, read N- to C-terminus: Large ribosomal subunit protein uL16c (143 aa).

The protein belongs to the universal ribosomal protein uL16 family. Part of the 50S ribosomal subunit.

Its subcellular location is the plastid. The protein resides in the chloroplast. This is Large ribosomal subunit protein uL16c from Marchantia polymorpha (Common liverwort).